The primary structure comprises 180 residues: Stathmin-3 (180 aa).

S-palmitoyl cysteine attachment occurs at residues Cys22 and Cys24. The 143-residue stretch at 38–180 (GDMEVKQLDK…NKEQREEMSG (143 aa)) folds into the SLD domain. Residues Ser50, Ser60, Ser65, Ser68, Ser72, Ser73, and Ser81 each carry the phosphoserine modification. A disordered region spans residues 59 to 82 (KSPSDLSPESPMLSSPPKKKDTSL). A compositionally biased stretch (low complexity) spans 60–74 (SPSDLSPESPMLSSP). A coiled-coil region spans residues 76–179 (KKKDTSLEEL…RNKEQREEMS (104 aa)).

The protein belongs to the stathmin family. Interacts with STAT3. Interacts with CLU (secreted form); this interaction may act as an important modulator during neuronal differentiation. N-terminal palmitoylation promotes specific anchoring to the cytosolic leaflet of Golgi membranes and subsequent vesicular trafficking along dendrites and axons. Neuronal Stathmins are substrates for palmitoyltransferases ZDHHC3, ZDHHC7 and ZDHHC15.

The protein resides in the golgi apparatus. It localises to the cell projection. The protein localises to the growth cone. It is found in the axon. Its subcellular location is the cytoplasm. The protein resides in the cytosol. Functionally, exhibits microtubule-destabilizing activity, which is antagonized by STAT3. The sequence is that of Stathmin-3 (STMN3) from Macaca fascicularis (Crab-eating macaque).